The sequence spans 256 residues: Triosephosphate isomerase (256 aa).

12 to 14 (NWK) provides a ligand contact to substrate. Catalysis depends on H99, which acts as the Electrophile. E169 serves as the catalytic Proton acceptor. Substrate-binding positions include G175, S214, and 235-236 (GG).

Belongs to the triosephosphate isomerase family. In terms of assembly, homodimer.

The protein resides in the cytoplasm. The catalysed reaction is D-glyceraldehyde 3-phosphate = dihydroxyacetone phosphate. Its pathway is carbohydrate biosynthesis; gluconeogenesis. It functions in the pathway carbohydrate degradation; glycolysis; D-glyceraldehyde 3-phosphate from glycerone phosphate: step 1/1. Involved in the gluconeogenesis. Catalyzes stereospecifically the conversion of dihydroxyacetone phosphate (DHAP) to D-glyceraldehyde-3-phosphate (G3P). In Rhizobium etli (strain ATCC 51251 / DSM 11541 / JCM 21823 / NBRC 15573 / CFN 42), this protein is Triosephosphate isomerase.